A 319-amino-acid polypeptide reads, in one-letter code: Quinolinate synthase (319 aa).

Iminosuccinate contacts are provided by His-34 and Ser-51. Cys-96 serves as a coordination point for [4Fe-4S] cluster. Iminosuccinate-binding positions include Tyr-122–Asn-124 and Ser-139. Cys-182 serves as a coordination point for [4Fe-4S] cluster. Iminosuccinate-binding positions include His-208–Glu-210 and Thr-225. Cys-276 contacts [4Fe-4S] cluster.

Belongs to the quinolinate synthase family. Type 2 subfamily. Requires [4Fe-4S] cluster as cofactor.

The protein resides in the cytoplasm. The catalysed reaction is iminosuccinate + dihydroxyacetone phosphate = quinolinate + phosphate + 2 H2O + H(+). Its pathway is cofactor biosynthesis; NAD(+) biosynthesis; quinolinate from iminoaspartate: step 1/1. Catalyzes the condensation of iminoaspartate with dihydroxyacetone phosphate to form quinolinate. The polypeptide is Quinolinate synthase (Thermosynechococcus vestitus (strain NIES-2133 / IAM M-273 / BP-1)).